The primary structure comprises 471 residues: Variant surface glycoprotein ILTAT 1.21 (471 aa).

Residues 1–21 (MLRALLPSTTLALILAGGGHA) form the signal peptide. N-linked (GlcNAc...) asparagine glycans are attached at residues N64 and N405. The interval 406 to 449 (ATADECPETRCEYDSEKNECRPKKGTETTATGPGERTTPADGKA) is disordered. The span at 412 to 431 (PETRCEYDSEKNECRPKKGT) shows a compositional bias: basic and acidic residues. A glycan (N-linked (GlcNAc...) asparagine) is linked at N450. The GPI-anchor amidated serine moiety is linked to residue S454. A propeptide spans 455-471 (DSLLIKTSPLWLAFLLF) (removed in mature form).

The protein resides in the cell membrane. Its function is as follows. VSG forms a coat on the surface of the parasite. The trypanosome evades the immune response of the host by expressing a series of antigenically distinct VSGs from an estimated 1000 VSG genes. The polypeptide is Variant surface glycoprotein ILTAT 1.21 (Trypanosoma brucei brucei).